The following is a 226-amino-acid chain: Molybdenum transport system permease protein ModB (226 aa).

The ABC transmembrane type-1 domain maps to 11-217 (IRLTLELASL…SFLVLFALYS (207 aa)). The next 5 helical transmembrane spans lie at 17–37 (LASL…WWLA), 47–67 (IGAV…FYLL), 88–108 (LPFT…PFVV), 150–170 (ITAA…VLMI), and 197–217 (AHWL…ALYS).

It belongs to the binding-protein-dependent transport system permease family. CysTW subfamily.

It localises to the cell inner membrane. Functionally, part of the binding-protein-dependent transport system for molybdenum; probably responsible for the translocation of the substrate across the membrane. This chain is Molybdenum transport system permease protein ModB (modB), found in Azotobacter vinelandii.